The following is a 236-amino-acid chain: MMDANEIIQFISDSKKSTPVKVYVKGELDKLSASNTIKTFVDSKSGTIFGEWKDIQAYLEENKSLIEDYIIENDRRNSAIPMLDLKNINARIEPGAIIRDQVEIGDGAVIMMGASINIGSVIGEGTMIDMNAVLGGRATVGKNCHIGAGSVLAGVIEPPSAKPVIVEDDVVIGANVVILEGITVGKGSIVAAGSIVTKDVAPNTLVGGTPAKVLKEIDEQTKSKTEIKQELRKLDN.

This sequence belongs to the transferase hexapeptide repeat family. DapH subfamily.

It carries out the reaction (S)-2,3,4,5-tetrahydrodipicolinate + acetyl-CoA + H2O = L-2-acetamido-6-oxoheptanedioate + CoA. The protein operates within amino-acid biosynthesis; L-lysine biosynthesis via DAP pathway; LL-2,6-diaminopimelate from (S)-tetrahydrodipicolinate (acetylase route): step 1/3. In terms of biological role, catalyzes the transfer of an acetyl group from acetyl-CoA to tetrahydrodipicolinate. This is 2,3,4,5-tetrahydropyridine-2,6-dicarboxylate N-acetyltransferase from Oceanobacillus iheyensis (strain DSM 14371 / CIP 107618 / JCM 11309 / KCTC 3954 / HTE831).